Reading from the N-terminus, the 1137-residue chain is Eukaryotic translation initiation factor 3 subunit A (1137 aa).

Residues 319 to 501 enclose the PCI domain; that stretch reads LQRMAAHVLL…NSIYFGTDLT (183 aa). Composition is skewed to basic and acidic residues over residues 588-623 and 829-899; these read QNNA…EERE and AAEE…RGGD. Disordered stretches follow at residues 588–631 and 829–1137; these read QNNA…QNEI and AAEE…VKRR. Phosphoserine is present on serine 908. Composition is skewed to basic and acidic residues over residues 922–971, 985–1046, 1054–1083, and 1106–1127; these read RGIE…EPDS, SRDE…EPQR, DAPR…RGDQ, and AREE…KAAD.

The protein belongs to the eIF-3 subunit A family. As to quaternary structure, component of the eukaryotic translation initiation factor 3 (eIF-3) complex. The eIF-3 complex interacts with pix.

The protein resides in the cytoplasm. In terms of biological role, RNA-binding component of the eukaryotic translation initiation factor 3 (eIF-3) complex, which is involved in protein synthesis of a specialized repertoire of mRNAs and, together with other initiation factors, stimulates binding of mRNA and methionyl-tRNAi to the 40S ribosome. The eIF-3 complex specifically targets and initiates translation of a subset of mRNAs involved in cell proliferation. This Drosophila yakuba (Fruit fly) protein is Eukaryotic translation initiation factor 3 subunit A.